The chain runs to 159 residues: Small ribosomal subunit protein uS17 (159 aa).

It belongs to the universal ribosomal protein uS17 family.

It is found in the cytoplasm. This is Small ribosomal subunit protein uS17 (RPS11) from Zea mays (Maize).